The primary structure comprises 286 residues: MKQLTETQQLKELIAQYRSEGRTIGFVPTMGFLHEGHLTLVEKASKENDIVVMSIFVNPTQFGPGEDYEAYPRDLKRDARLAEQAGADVLFTPSPSDMYKGEQNVAVQVKRRTDVLCGASRVGHFDGVATVLTKFFNLVKPTRAYFGLKDAQQAAVVDGLIEDFFMDIELVAVDTVREEDGLAKSSRNVYLTEQERKEAPMIYKALQQGAELIRDGERNPETVIKTVTDIIENTSGVIDYAELYAYPELTPLKTLNGKVILACAVQFSKARLIDNIIIDIDEWERS.

30–37 (MGFLHEGH) provides a ligand contact to ATP. The active-site Proton donor is the histidine 37. Glutamine 61 is a binding site for (R)-pantoate. Beta-alanine is bound at residue glutamine 61. Residue 147–150 (GLKD) coordinates ATP. Glutamine 153 contributes to the (R)-pantoate binding site. Residues valine 176 and 184–187 (KSSR) each bind ATP.

This sequence belongs to the pantothenate synthetase family. In terms of assembly, homodimer.

The protein resides in the cytoplasm. It catalyses the reaction (R)-pantoate + beta-alanine + ATP = (R)-pantothenate + AMP + diphosphate + H(+). The protein operates within cofactor biosynthesis; (R)-pantothenate biosynthesis; (R)-pantothenate from (R)-pantoate and beta-alanine: step 1/1. Functionally, catalyzes the condensation of pantoate with beta-alanine in an ATP-dependent reaction via a pantoyl-adenylate intermediate. The polypeptide is Pantothenate synthetase (Bacillus velezensis (strain DSM 23117 / BGSC 10A6 / LMG 26770 / FZB42) (Bacillus amyloliquefaciens subsp. plantarum)).